The following is a 75-amino-acid chain: MAVPKKRKSKSRANSQNHVWKREIVKQARRAVSLAKALLGGNTNFLLVSPGPTTPIKPNPKKQTGRRPRSQRRRT.

Positions 49–75 (SPGPTTPIKPNPKKQTGRRPRSQRRRT) are disordered. A compositionally biased stretch (basic residues) spans 59–75 (NPKKQTGRRPRSQRRRT).

The protein belongs to the bacterial ribosomal protein bL32 family.

It localises to the plastid. The protein localises to the chloroplast. This chain is Large ribosomal subunit protein bL32c, found in Nephroselmis olivacea (Green alga).